The sequence spans 164 residues: Large ribosomal subunit protein uL11 (164 aa).

The protein belongs to the universal ribosomal protein uL11 family. As to quaternary structure, part of the ribosomal stalk of the 50S ribosomal subunit. Interacts with L10 and the large rRNA to form the base of the stalk. L10 forms an elongated spine to which L12 dimers bind in a sequential fashion forming a multimeric L10(L12)X complex.

Its function is as follows. Forms part of the ribosomal stalk which helps the ribosome interact with GTP-bound translation factors. This chain is Large ribosomal subunit protein uL11, found in Pyrococcus furiosus (strain ATCC 43587 / DSM 3638 / JCM 8422 / Vc1).